The chain runs to 843 residues: Translation initiation factor IF-2 (843 aa).

Disordered stretches follow at residues 55–185 (AEAV…EDRD) and 209–228 (KVEE…QVKV). The span at 62 to 106 (PQEKPKKSAPKKEEKPKEEVKKEAEEKVAASKKEEEKPQEKKSVE) shows a compositional bias: basic and acidic residues. The segment covering 114–128 (LKKRRGLVIVKKKRP) has biased composition (basic residues). The segment covering 129 to 141 (KVEPKVEEKEAKQ) has biased composition (basic and acidic residues). Basic residues predominate over residues 156–165 (LKRKPKKAKK). Basic and acidic residues-rich tracts occupy residues 171–185 (KKNE…EDRD) and 209–221 (KVEE…EPQK). Residues 342 to 511 (ERPPVITIMG…LLQAEIMELK (170 aa)) form the tr-type G domain. Positions 351-358 (GHVDHGKT) are G1. 351-358 (GHVDHGKT) is a GTP binding site. Positions 376 to 380 (GITQH) are G2. Residues 397–400 (DTPG) form a G3 region. GTP is bound by residues 397-401 (DTPGH) and 451-454 (NKID). Residues 451–454 (NKID) form a G4 region. The interval 487–489 (SAK) is G5.

Belongs to the TRAFAC class translation factor GTPase superfamily. Classic translation factor GTPase family. IF-2 subfamily.

The protein resides in the cytoplasm. In terms of biological role, one of the essential components for the initiation of protein synthesis. Protects formylmethionyl-tRNA from spontaneous hydrolysis and promotes its binding to the 30S ribosomal subunits. Also involved in the hydrolysis of GTP during the formation of the 70S ribosomal complex. The polypeptide is Translation initiation factor IF-2 (Nitratiruptor sp. (strain SB155-2)).